Consider the following 269-residue polypeptide: MSRFDTLFANLKAKNEGAFVPFVTLCDPDFDCSFEIIETLIANGADALELGFPFSDPLLDGPVIQAANKRALDGGYSTDACFEMIAKIRSKYPEIPIGLLLCANLVFVPTQDVFFKRCAETGVDAVLIADVPVLAAEEFTQAAKKHGIQSVFICPPNADQATIERIARLTEGYTYLVSRAGVTSAENQAHAKNLDNLIESLKRSNSAPILQGFGIAKPEQVKEALVLGCDGAISGSAIVKIIERNLDSQTQLLSELAKFVSVMKAATKS.

Residues E49 and D60 each act as proton acceptor in the active site.

The protein belongs to the TrpA family. As to quaternary structure, tetramer of two alpha and two beta chains.

It carries out the reaction (1S,2R)-1-C-(indol-3-yl)glycerol 3-phosphate + L-serine = D-glyceraldehyde 3-phosphate + L-tryptophan + H2O. The protein operates within amino-acid biosynthesis; L-tryptophan biosynthesis; L-tryptophan from chorismate: step 5/5. Functionally, the alpha subunit is responsible for the aldol cleavage of indoleglycerol phosphate to indole and glyceraldehyde 3-phosphate. This is Tryptophan synthase alpha chain from Actinobacillus pleuropneumoniae serotype 5b (strain L20).